Here is a 194-residue protein sequence, read N- to C-terminus: Threonylcarbamoyl-AMP synthase (194 aa).

Residues 12-194 (SPNMKDLLIQ…DVMTGKLIRE (183 aa)) form the YrdC-like domain.

It belongs to the SUA5 family. TsaC subfamily.

The protein resides in the cytoplasm. It carries out the reaction L-threonine + hydrogencarbonate + ATP = L-threonylcarbamoyladenylate + diphosphate + H2O. Functionally, required for the formation of a threonylcarbamoyl group on adenosine at position 37 (t(6)A37) in tRNAs that read codons beginning with adenine. Catalyzes the conversion of L-threonine, HCO(3)(-)/CO(2) and ATP to give threonylcarbamoyl-AMP (TC-AMP) as the acyladenylate intermediate, with the release of diphosphate. The polypeptide is Threonylcarbamoyl-AMP synthase (Blochmanniella pennsylvanica (strain BPEN)).